The chain runs to 228 residues: NOI-like protein (228 aa).

A compositionally biased stretch (basic and acidic residues) spans 56-75 (AQDHQHSEKHHNDTSTDYHV). Disordered stretches follow at residues 56 to 87 (AQDHQHSEKHHNDTSTDYHVVKQHRRKHHRRE) and 99 to 133 (RPHRSPFQGVDMDSHRSRNHGTSATMSSSVKRNSD). A compositionally biased stretch (basic residues) spans 76-86 (VKQHRRKHHRR). The segment covering 118 to 133 (HGTSATMSSSVKRNSD) has biased composition (polar residues).

Belongs to the RIN4 family.

This is NOI-like protein from Elaeis oleifera (American oil palm).